An 86-amino-acid polypeptide reads, in one-letter code: RNA-binding protein Hfq (86 aa).

Residues 9-68 form the Sm domain; the sequence is DPYLNTLRKEKVGVSIYLVNGIKLQGTIESFDQFVILLKNTVSQMVYKHAISTVVPVRPI.

The protein belongs to the Hfq family. As to quaternary structure, homohexamer.

Functionally, RNA chaperone that binds small regulatory RNA (sRNAs) and mRNAs to facilitate mRNA translational regulation in response to envelope stress, environmental stress and changes in metabolite concentrations. Also binds with high specificity to tRNAs. The chain is RNA-binding protein Hfq from Pseudomonas fluorescens (strain Pf0-1).